The sequence spans 248 residues: MKSILNDFLLMIQFFTRIPINKNLQCEKANFRRGAFFLPVVASIIGGMEFLIYLGLKNFLPSNVIIVLLLLFTAMITGGLHMDGLADTCDGFFSLRDKERIIEIMKDSRIGSYGTIALIIDLLLKYQLLYSLVLKGYSIAIFLAPIIGRISILFLCLSKRTAKKNGSGNIFIGNMSKPIVFFISTIVLVLSTYFLGLRATIIPFIGALLITYLLYLLCLNKINGLTGDTLGACNELGEITFLLILLMM.

The next 6 membrane-spanning stretches (helical) occupy residues 36–56 (FFLP…YLGL), 59–79 (FLPS…ITGG), 114–134 (GTIA…SLVL), 137–157 (YSIA…FLCL), 170–190 (IFIG…VLVL), and 199–219 (ATII…LLCL).

It belongs to the CobS family. Mg(2+) serves as cofactor.

Its subcellular location is the cell membrane. The catalysed reaction is alpha-ribazole + adenosylcob(III)inamide-GDP = adenosylcob(III)alamin + GMP + H(+). It catalyses the reaction alpha-ribazole 5'-phosphate + adenosylcob(III)inamide-GDP = adenosylcob(III)alamin 5'-phosphate + GMP + H(+). It participates in cofactor biosynthesis; adenosylcobalamin biosynthesis; adenosylcobalamin from cob(II)yrinate a,c-diamide: step 7/7. Its function is as follows. Joins adenosylcobinamide-GDP and alpha-ribazole to generate adenosylcobalamin (Ado-cobalamin). Also synthesizes adenosylcobalamin 5'-phosphate from adenosylcobinamide-GDP and alpha-ribazole 5'-phosphate. This Clostridium botulinum (strain Loch Maree / Type A3) protein is Adenosylcobinamide-GDP ribazoletransferase.